The sequence spans 550 residues: Eukaryotic translation initiation factor 3 subunit L (550 aa).

The tract at residues 1–20 (MVRDSFDGGHTGDPERDLAY) is disordered. Positions 309-503 (EATKIFVNCL…IDDSTTDLDF (195 aa)) constitute a PCI domain.

The protein belongs to the eIF-3 subunit L family. As to quaternary structure, component of the eukaryotic translation initiation factor 3 (eIF-3) complex.

The protein localises to the cytoplasm. In terms of biological role, component of the eukaryotic translation initiation factor 3 (eIF-3) complex, which is involved in protein synthesis of a specialized repertoire of mRNAs and, together with other initiation factors, stimulates binding of mRNA and methionyl-tRNAi to the 40S ribosome. The eIF-3 complex specifically targets and initiates translation of a subset of mRNAs involved in cell proliferation. The polypeptide is Eukaryotic translation initiation factor 3 subunit L (Brugia malayi (Filarial nematode worm)).